Consider the following 329-residue polypeptide: MNNLNSVFDYEDIQLIPNKCVINSRSEADTSVKLGNYTFKLPVVPANMQTIIDDKIAEMLAKEGYFYIMHRFEAENRAAFIKKMHKDGLIASISVGVKADEHAFIREISAEALIPEFITIDIAHGHADSVIKTIQLIKRLMPQTFVIAGNVGTPEAVRELENAGADATKVGIGPGKVCITKVKTGFGTGGWQLAAVKWCAKAASKPVIADGGIRTHGDIAKSIRMGATMVMVGSLFAAHEESPGQTVERDGQLFKEYFGSASEYQKGEHKNVEGKKILLPHKGSLKDTLKEMEEDLQSSISYAGGRDLSALTKVDYVVVKNSIWNGDAI.

The Thioimidate intermediate role is filled by cysteine 178. 207-230 (VIADGGIRTHGDIAKSIRMGATMV) serves as a coordination point for NADP(+).

The protein belongs to the IMPDH/GMPR family. GuaC type 2 subfamily.

It catalyses the reaction IMP + NH4(+) + NADP(+) = GMP + NADPH + 2 H(+). In terms of biological role, catalyzes the irreversible NADPH-dependent deamination of GMP to IMP. It functions in the conversion of nucleobase, nucleoside and nucleotide derivatives of G to A nucleotides, and in maintaining the intracellular balance of A and G nucleotides. In Lactococcus lactis subsp. cremoris (strain SK11), this protein is GMP reductase.